A 156-amino-acid polypeptide reads, in one-letter code: RNA pyrophosphohydrolase (156 aa).

The Nudix hydrolase domain maps to 6 to 148 (NYRPNVAAIV…KKNIYVKVIK (143 aa)). Residues 43 to 64 (GGIDKGESVKNALFRELKEEIG) carry the Nudix box motif.

The protein belongs to the Nudix hydrolase family. RppH subfamily. Requires a divalent metal cation as cofactor.

Functionally, accelerates the degradation of transcripts by removing pyrophosphate from the 5'-end of triphosphorylated RNA, leading to a more labile monophosphorylated state that can stimulate subsequent ribonuclease cleavage. This Campylobacter jejuni subsp. jejuni serotype O:6 (strain 81116 / NCTC 11828) protein is RNA pyrophosphohydrolase.